Reading from the N-terminus, the 216-residue chain is [5-(aminomethyl)furan-3-yl]methyl phosphate kinase (216 aa).

ATP contacts are provided by residues 5–9, Gly39, Asp142, 147–152, and Gly166; these read KIGGS and YDKFPG.

The protein belongs to the MfnE family. As to quaternary structure, homotrimer. Mg(2+) is required as a cofactor.

The enzyme catalyses [5-(aminomethyl)-3-furyl]methyl phosphate + ATP = [5-(aminomethyl)furan-3-yl]methyl diphosphate + ADP. Its pathway is cofactor biosynthesis; methanofuran biosynthesis. Its activity is regulated as follows. Inhibited by EDTA. Catalyzes the formation of 5-(aminomethyl)-3-furanmethanol diphosphate (F1-PP) from 5-(aminomethyl)-3-furanmethanol phosphate (F1-P) and ATP. In vitro, can also act as an adenylate kinase that catalyzes the transfer of a phosphoryl group from ATP to AMP, generating two molecules of ADP. This chain is [5-(aminomethyl)furan-3-yl]methyl phosphate kinase, found in Methanocaldococcus jannaschii (strain ATCC 43067 / DSM 2661 / JAL-1 / JCM 10045 / NBRC 100440) (Methanococcus jannaschii).